The sequence spans 444 residues: Probable glycolate oxidase iron-sulfur subunit (444 aa).

2 4Fe-4S ferredoxin-type domains span residues 14–46 (FKER…GFQE) and 69–100 (EDVE…LLEE). Positions 26, 29, 32, 36, 78, 81, 84, and 88 each coordinate [4Fe-4S] cluster.

The glycolate oxidase likely consists of several subunits including GlcD and GlcF. It depends on [4Fe-4S] cluster as a cofactor.

Its subcellular location is the cell membrane. It carries out the reaction glycolate + A = glyoxylate + AH2. The catalysed reaction is (R)-lactate + A = pyruvate + AH2. In terms of biological role, component of a complex that catalyzes the oxidation of glycolate to glyoxylate. Is also able to oxidize D-lactate ((R)-lactate). Does not link directly to O(2), and 2,6-dichloroindophenol (DCIP) and phenazine methosulfate (PMS) can act as artificial electron acceptors in vitro, but the physiological molecule that functions as primary electron acceptor during glycolate oxidation is unknown. The polypeptide is Probable glycolate oxidase iron-sulfur subunit (glcF) (Bacillus subtilis (strain 168)).